A 708-amino-acid chain; its full sequence is Polyribonucleotide nucleotidyltransferase (708 aa).

Asp486 and Asp492 together coordinate Mg(2+). Residues 553–612 enclose the KH domain; the sequence is PRITTIKVPPQKVREVIGSGGKVIREITEVTGTKIDIEDDGTIKIASADAEATQRAVDWI. The region spanning 622–690 is the S1 motif domain; that stretch reads GVVYTGKVVK…DRGKIKLSMK (69 aa).

The protein belongs to the polyribonucleotide nucleotidyltransferase family. Mg(2+) is required as a cofactor.

Its subcellular location is the cytoplasm. The catalysed reaction is RNA(n+1) + phosphate = RNA(n) + a ribonucleoside 5'-diphosphate. Its function is as follows. Involved in mRNA degradation. Catalyzes the phosphorolysis of single-stranded polyribonucleotides processively in the 3'- to 5'-direction. This is Polyribonucleotide nucleotidyltransferase from Rhodospirillum rubrum (strain ATCC 11170 / ATH 1.1.1 / DSM 467 / LMG 4362 / NCIMB 8255 / S1).